Consider the following 338-residue polypeptide: Protein pelota homolog (338 aa).

The protein belongs to the eukaryotic release factor 1 family. Pelota subfamily. In terms of assembly, monomer. A divalent metal cation serves as cofactor.

The protein resides in the cytoplasm. In terms of biological role, may function in recognizing stalled ribosomes, interact with stem-loop structures in stalled mRNA molecules, and effect endonucleolytic cleavage of the mRNA. May play a role in the release non-functional ribosomes and degradation of damaged mRNAs. Has endoribonuclease activity. In Caldivirga maquilingensis (strain ATCC 700844 / DSM 13496 / JCM 10307 / IC-167), this protein is Protein pelota homolog.